We begin with the raw amino-acid sequence, 357 residues long: Arginine kinase Pro c 2.0101 (357 aa).

Residues 9-91 form the Phosphagen kinase N-terminal domain; that stretch reads KLEEGFKKLE…FDPIIEDYHK (83 aa). Position 64–68 (64–68) interacts with L-arginine; the sequence is GVGIY. A Phosphagen kinase C-terminal domain is found at 119–356; the sequence is FVISTRVRCG…LELIKIEKEM (238 aa). ATP is bound by residues 122–126 and His-185; that span reads STRVR. Position 225 (Glu-225) interacts with L-arginine. Arg-229 lines the ATP pocket. Residue Cys-271 participates in L-arginine binding. Residues 280-284 and 309-314 each bind ATP; these read RASVH and RGTRGE. Glu-314 provides a ligand contact to L-arginine.

It belongs to the ATP:guanido phosphotransferase family. Glycosylated. Muscle (at protein level).

The catalysed reaction is L-arginine + ATP = N(omega)-phospho-L-arginine + ADP + H(+). Catalyzes the reversible transfer of high energy ATP gamma-phosphate group to L-arginine. The chain is Arginine kinase Pro c 2.0101 from Procambarus clarkii (Red swamp crayfish).